The primary structure comprises 333 residues: Extracellular globin (333 aa).

Positions 1–18 are cleaved as a signal peptide; the sequence is MHSSIVLAIVLFVAIASA. 2 Globin domains span residues 25–167 and 174–318; these read CMKS…HHGR and CMNS…KHAK. Glutamine 82 and histidine 114 together coordinate heme b. Asparagine 216 is a glycosylation site (N-linked (GlcNAc...) asparagine). Heme b-binding residues include glutamine 231 and histidine 263. The interval 314–333 is disordered; the sequence is DKHAKAEKDHHEGEHKEEHH.

Belongs to the globin family. As to quaternary structure, homooctamer.

The protein localises to the secreted. It localises to the extracellular space. This is Extracellular globin from Pseudoterranova decipiens (Sealworm).